We begin with the raw amino-acid sequence, 376 residues long: Arf-GAP with dual PH domain-containing protein 2 (376 aa).

The Arf-GAP domain maps to 9-130 (KRLLELLQAA…EFMAEKAVSP (122 aa)). The C4-type zinc-finger motif lies at 25–48 (CADCGAADPDWASYKLGVFICLHC). PH domains follow at residues 131–232 (PGDR…AARL) and 254–360 (NYLK…GVLS).

In terms of tissue distribution, expressed in many tissues, with highest levels in fat, heart and skeletal muscle. Also detected in kidney, liver and lung.

The protein resides in the cytoplasm. Its subcellular location is the cell membrane. In terms of biological role, GTPase-activating protein for the ADP ribosylation factor family (Potential). Binds phosphatidylinositol 4,5-bisphosphate, phosphatidylinositol 3,4,5-trisphosphate (PtdInsP3) and inositol 1,3,4,5-tetrakisphosphate (InsP4). Binding of phosphatidylinositol 3,5-bisphosphate and phosphatidylinositol 3,4-bisphosphate occurs at a much lower affinity. Possesses a stoichiometry of two binding sites for InsP4 with identical affinity. The sequence is that of Arf-GAP with dual PH domain-containing protein 2 (Adap2) from Rattus norvegicus (Rat).